A 951-amino-acid polypeptide reads, in one-letter code: Coiled-coil and C2 domain-containing protein 1A (951 aa).

Disordered stretches follow at residues 80-139 (CMRD…LETT), 185-266 (AIDE…RQRD), 306-346 (VDLS…PPPR), and 437-491 (NQDE…TRAQ). Residues 84 to 104 (PDEDEEEGTDEDDLEADDDLL) are compositionally biased toward acidic residues. Phosphothreonine is present on residues threonine 92, threonine 204, and threonine 206. The segment covering 201–210 (PASTPTYSPA) has biased composition (low complexity). Position 208 is a phosphoserine; by CDK1 (serine 208). Serine 253 and serine 324 each carry phosphoserine. Over residues 311–333 (LPPPPDQLPPDPPSPPSQPPTPA) the composition is skewed to pro residues. A coiled-coil region spans residues 346 to 392 (RTLLEALEQRMERYQVAAAQAKSKGDQRKARMHERIVKQYQDAIRAH). A Phosphoserine modification is found at serine 455. Over residues 475 to 488 (SAPTAKAPPKATST) the composition is skewed to low complexity. Residues 484-517 (KATSTRAQQQLAFLEGRKKQLLQAALRAKQKNDV) are a coiled coil. The region spanning 637 to 771 (RFEQRTFSVI…EIACEVREIL (135 aa)) is the C2 domain. Positions 818–841 (TQVAGPKGKAPPVPAPARESGNRS) are disordered.

Belongs to the CC2D1 family. In terms of processing, phosphorylation on Ser-208 by CDK1 promotes spindle pole localization and association with SCC1/RAD21.

It is found in the cytoplasm. Its subcellular location is the nucleus. The protein localises to the cytoskeleton. It localises to the microtubule organizing center. The protein resides in the centrosome. Functionally, transcription factor that binds specifically to the DRE (dual repressor element) and represses HTR1A gene transcription in neuronal cells. The combination of calcium and ATP specifically inactivates the binding with FRE. May play a role in the altered regulation of HTR1A associated with anxiety and major depression. Mediates HDAC-independent repression of HTR1A promoter in neuronal cell. Performs essential function in controlling functional maturation of synapses. Plays distinct roles depending on its localization. When cytoplasmic, acts as a scaffold protein in the PI3K/PDK1/AKT pathway. Repressor of HTR1A when nuclear. In the centrosome, regulates spindle pole localization of the cohesin subunit SCC1/RAD21, thereby mediating centriole cohesion during mitosis. This Homo sapiens (Human) protein is Coiled-coil and C2 domain-containing protein 1A (CC2D1A).